We begin with the raw amino-acid sequence, 471 residues long: Glutamyl-tRNA(Gln) amidotransferase subunit A (471 aa).

Catalysis depends on charge relay system residues Lys-66 and Ser-141. The Acyl-ester intermediate role is filled by Ser-165.

It belongs to the amidase family. GatA subfamily. In terms of assembly, heterotrimer of A, B and C subunits.

It catalyses the reaction L-glutamyl-tRNA(Gln) + L-glutamine + ATP + H2O = L-glutaminyl-tRNA(Gln) + L-glutamate + ADP + phosphate + H(+). Its function is as follows. Allows the formation of correctly charged Gln-tRNA(Gln) through the transamidation of misacylated Glu-tRNA(Gln) in organisms which lack glutaminyl-tRNA synthetase. The reaction takes place in the presence of glutamine and ATP through an activated gamma-phospho-Glu-tRNA(Gln). This is Glutamyl-tRNA(Gln) amidotransferase subunit A from Thermus thermophilus (strain ATCC BAA-163 / DSM 7039 / HB27).